The chain runs to 593 residues: Histone-arginine methyltransferase CARMER (593 aa).

The SAM-dependent MTase PRMT-type domain maps to 122–429; sequence ASQYFQFYGY…QRQSYDVEMD (308 aa). S-adenosyl-L-methionine is bound by residues Gln-135, Arg-144, Gly-168, Glu-190, Glu-219, and Thr-247. An Asymmetric dimethylarginine; by autocatalysis modification is found at Arg-482. Residues 521–540 form a disordered region; that stretch reads LISSTGRQQSQQQTTPAQPL. The segment covering 523 to 535 has biased composition (low complexity); it reads SSTGRQQSQQQTT.

It belongs to the class I-like SAM-binding methyltransferase superfamily. Protein arginine N-methyltransferase family. In terms of assembly, homodimer. In terms of processing, the dimethylated protein is the major form.

Its subcellular location is the cytoplasm. It localises to the nucleus. The enzyme catalyses L-arginyl-[protein] + 2 S-adenosyl-L-methionine = N(omega),N(omega)-dimethyl-L-arginyl-[protein] + 2 S-adenosyl-L-homocysteine + 2 H(+). In terms of biological role, methylates (mono- and asymmetric dimethylation) the guanidino nitrogens of arginyl residues in proteins. May methylate histone H3 at 'Arg-17' and activate transcription via chromatin remodeling. This is Histone-arginine methyltransferase CARMER from Aedes aegypti (Yellowfever mosquito).